A 374-amino-acid polypeptide reads, in one-letter code: Multicilin (374 aa).

The stretch at 164–212 (EQYWRDVADHNQKALGDALVENNQLQVSLTEKQEEIVSLKEKNIQLNEL) forms a coiled coil. Positions 230-260 (RTKQNSGATQGRLPVKRSLEDFYPQSNEPDS) are disordered. The TIRT domain stretch occupies residues 330-374 (TDLEDVSFRTSIKEHSTIRTLAFPQGNAFTIRTSGGGYKFRWVPN).

Belongs to the geminin family. Component of the EDM complex, at least composed of e2f4, e2f5, mcidas and tfdp1. In terms of tissue distribution, expressed in multiciliate differentiating cells. Expression is lost by stage 26, when multiciliate cells in the skin are fully differentiated, but is then detected in the developing nephrostomes of the kidneys where multiciliate cells form at later stages.

It localises to the nucleus. Its function is as follows. Transcription regulator specifically required for multiciliate cell differentiation. Acts in a multiprotein complex containing E2F4 and E2F5 that binds and activates genes required for centriole biogenesis. Activates genes required for centriole assembly (plk4, cep152) and genes specifically required for motile cilia formation (foxj1). Also promotes the deuterosome pathway of centriole biogenesis by activating expression of ccdc67/deup1, but not its paralog cep63. The protein is Multicilin (mcidas) of Xenopus laevis (African clawed frog).